Here is a 342-residue protein sequence, read N- to C-terminus: Dihydroorotate dehydrogenase (quinone) (342 aa).

Residues 65–69 (AGLDK) and Thr-89 contribute to the FMN site. Lys-69 is a binding site for substrate. 114–118 (NRMGF) contributes to the substrate binding site. 2 residues coordinate FMN: Asn-142 and Asn-175. Residue Asn-175 coordinates substrate. Ser-178 (nucleophile) is an active-site residue. Asn-180 provides a ligand contact to substrate. Residues Lys-220 and Thr-248 each contribute to the FMN site. 249–250 (NT) lines the substrate pocket. FMN is bound by residues Gly-271, Gly-300, and 321 to 322 (YT).

Belongs to the dihydroorotate dehydrogenase family. Type 2 subfamily. In terms of assembly, monomer. It depends on FMN as a cofactor.

Its subcellular location is the cell membrane. It catalyses the reaction (S)-dihydroorotate + a quinone = orotate + a quinol. It functions in the pathway pyrimidine metabolism; UMP biosynthesis via de novo pathway; orotate from (S)-dihydroorotate (quinone route): step 1/1. Catalyzes the conversion of dihydroorotate to orotate with quinone as electron acceptor. This is Dihydroorotate dehydrogenase (quinone) from Burkholderia pseudomallei (strain K96243).